A 348-amino-acid chain; its full sequence is Small ribosomal subunit biogenesis GTPase RsgA (348 aa).

Basic residues predominate over residues Met-1–Ile-14. A disordered region spans residues Met-1 to Gly-39. A compositionally biased stretch (basic and acidic residues) spans Lys-16–Gln-31. In terms of domain architecture, CP-type G spans Phe-116–Phe-275. GTP-binding positions include Asn-163–Asp-166 and Gly-217–Ser-225. Residues Cys-299, Cys-304, His-306, and Cys-312 each coordinate Zn(2+).

Belongs to the TRAFAC class YlqF/YawG GTPase family. RsgA subfamily. In terms of assembly, monomer. Associates with 30S ribosomal subunit, binds 16S rRNA. Zn(2+) is required as a cofactor.

It is found in the cytoplasm. Functionally, one of several proteins that assist in the late maturation steps of the functional core of the 30S ribosomal subunit. Helps release RbfA from mature subunits. May play a role in the assembly of ribosomal proteins into the subunit. Circularly permuted GTPase that catalyzes slow GTP hydrolysis, GTPase activity is stimulated by the 30S ribosomal subunit. This chain is Small ribosomal subunit biogenesis GTPase RsgA, found in Hahella chejuensis (strain KCTC 2396).